A 124-amino-acid chain; its full sequence is Ribonuclease pancreatic (124 aa).

Residues 1 to 13 (SETAAEKFERQHM) are compositionally biased toward basic and acidic residues. Residues 1-23 (SETAAEKFERQHMDSYSSSSSNS) are disordered. Residues Lys7 and Arg10 each contribute to the substrate site. His12 functions as the Proton acceptor in the catalytic mechanism. 4 cysteine pairs are disulfide-bonded: Cys26-Cys84, Cys40-Cys95, Cys58-Cys110, and Cys65-Cys72. Residues 41–45 (KPVNT), Lys66, and Arg85 each bind substrate. The active-site Proton donor is the His119.

Belongs to the pancreatic ribonuclease family. As to quaternary structure, monomer. Interacts with and forms tight 1:1 complexes with RNH1. Dimerization of two such complexes may occur. Interaction with RNH1 inhibits this protein. As to expression, pancreas.

The protein resides in the secreted. It catalyses the reaction an [RNA] containing cytidine + H2O = an [RNA]-3'-cytidine-3'-phosphate + a 5'-hydroxy-ribonucleotide-3'-[RNA].. The enzyme catalyses an [RNA] containing uridine + H2O = an [RNA]-3'-uridine-3'-phosphate + a 5'-hydroxy-ribonucleotide-3'-[RNA].. Functionally, endonuclease that catalyzes the cleavage of RNA on the 3' side of pyrimidine nucleotides. Acts on single-stranded and double-stranded RNA. This is Ribonuclease pancreatic (RNASE1) from Camelus bactrianus (Bactrian camel).